A 270-amino-acid polypeptide reads, in one-letter code: 2-aminoethanethiol dioxygenase (270 aa).

The segment at 21-48 (FRGSGGGRGASDRDAASGPEAPMQPGFP) is disordered. Positions 112 and 114 each coordinate Fe cation. The segment at 140 to 164 (GGQRPRALPPEQQFEPPLQPREREA) is disordered. His-193 contacts Fe cation. The segment at residues 220-223 (CHYY) is a cross-link (3'-(S-cysteinyl)-tyrosine (Cys-Tyr)).

Monomer. The cofactor is Fe cation.

The catalysed reaction is cysteamine + O2 = hypotaurine + H(+). The enzyme catalyses N-terminal L-cysteinyl-[protein] + O2 = N-terminal S-hydroxy-S-oxy-L-cysteinyl-[protein] + H(+). Functionally, plays a vital role in regulating thiol metabolism and preserving oxygen homeostasis by oxidizing the sulfur of cysteamine and N-terminal cysteine-containing proteins to their corresponding sulfinic acids using O2 as a cosubstrate. Catalyzes the oxidation of cysteamine (2-aminoethanethiol) to hypotaurine. Catalyzes the oxidation of regulators of G-protein signaling 4 (RGS4) and 5 (RGS5) and interleukin-32 (IL32). This Homo sapiens (Human) protein is 2-aminoethanethiol dioxygenase (ADO).